The primary structure comprises 209 residues: FK506-binding protein 2B (209 aa).

A signal peptide spans 1–19 (MRFSLLALLGTIVATSVSA). Residues 47 to 136 (GDELSMHYTG…VFEVELLEIK (90 aa)) form the PPIase FKBP-type domain. The helical transmembrane segment at 157–177 (FTSPSFLVSTGIIVALFLIVF) threads the bilayer. The stretch at 178–207 (KMAKKQDIAEANEKAAAATAEASTEKKEEK) forms a coiled coil. A disordered region spans residues 190–209 (EKAAAATAEASTEKKEEKKE). Basic and acidic residues predominate over residues 200–209 (STEKKEEKKE).

The protein belongs to the FKBP-type PPIase family. FKBP2 subfamily.

It localises to the membrane. It catalyses the reaction [protein]-peptidylproline (omega=180) = [protein]-peptidylproline (omega=0). Its activity is regulated as follows. Inhibited by both FK506 and rapamycin. In terms of biological role, PPIases accelerate the folding of proteins. It catalyzes the cis-trans isomerization of proline imidic peptide bonds in oligopeptides. This Rhizopus delemar (strain RA 99-880 / ATCC MYA-4621 / FGSC 9543 / NRRL 43880) (Mucormycosis agent) protein is FK506-binding protein 2B (FKBP3).